The following is an 892-amino-acid chain: Translation initiation factor IF-2 (892 aa).

Basic and acidic residues predominate over residues 165–175 (EEQAELERQKT). Disordered regions lie at residues 165-250 (EEQA…EDDS) and 264-300 (ERARRGSNTRGKGGGSHRGATHRGNENSIRSSGAHGF). Over residues 208-222 (PRAVRPAPAARPSVS) the composition is skewed to low complexity. Residues 391–560 (PRPPVVTIMG…SIQAEVLELK (170 aa)) enclose the tr-type G domain. Residues 400 to 407 (GHVDHGKT), 446 to 450 (DTPGH), and 500 to 503 (SKID) each bind GTP.

It belongs to the TRAFAC class translation factor GTPase superfamily. Classic translation factor GTPase family. IF-2 subfamily.

The protein resides in the cytoplasm. Its function is as follows. One of the essential components for the initiation of protein synthesis. Protects formylmethionyl-tRNA from spontaneous hydrolysis and promotes its binding to the 30S ribosomal subunits. Also involved in the hydrolysis of GTP during the formation of the 70S ribosomal complex. The polypeptide is Translation initiation factor IF-2 (Xylella fastidiosa (strain 9a5c)).